The sequence spans 261 residues: uncharacterized protein (261 aa).

22–46 lines the NADP(+) pocket; the sequence is IVTGGNSGLGQAFAMALAKAGANIF. Residue S153 participates in substrate binding. The active-site Proton acceptor is Y166.

It belongs to the short-chain dehydrogenases/reductases (SDR) family.

This is an uncharacterized protein from Escherichia coli (strain K12).